Here is a 157-residue protein sequence, read N- to C-terminus: Transcriptional repressor NrdR (157 aa).

The segment at 1-21 (MRCPYCGSEDSQVKDSRPAED) is disordered. Residues 3–34 (CPYCGSEDSQVKDSRPAEDGNAIRRRRICPDC) fold into a zinc finger. Basic and acidic residues predominate over residues 11–21 (SQVKDSRPAED). The ATP-cone domain maps to 49 to 139 (LMIIKKTGRK…VYRDFSHAED (91 aa)).

The protein belongs to the NrdR family. It depends on Zn(2+) as a cofactor.

Negatively regulates transcription of bacterial ribonucleotide reductase nrd genes and operons by binding to NrdR-boxes. This Sinorhizobium medicae (strain WSM419) (Ensifer medicae) protein is Transcriptional repressor NrdR.